The chain runs to 288 residues: Pyridoxal kinase PdxY (288 aa).

Residues Ser-12 and 47-48 each bind substrate; that span reads TQ. Residues Asp-114, Glu-151, Lys-184, and 211 to 214 each bind ATP; that span reads RPLL. Asp-225 is a substrate binding site.

Belongs to the pyridoxine kinase family. PdxY subfamily. As to quaternary structure, homodimer. Mg(2+) is required as a cofactor.

The enzyme catalyses pyridoxal + ATP = pyridoxal 5'-phosphate + ADP + H(+). It functions in the pathway cofactor metabolism; pyridoxal 5'-phosphate salvage; pyridoxal 5'-phosphate from pyridoxal: step 1/1. Its function is as follows. Pyridoxal kinase involved in the salvage pathway of pyridoxal 5'-phosphate (PLP). Catalyzes the phosphorylation of pyridoxal to PLP. In Pseudomonas paraeruginosa (strain DSM 24068 / PA7) (Pseudomonas aeruginosa (strain PA7)), this protein is Pyridoxal kinase PdxY.